Here is a 626-residue protein sequence, read N- to C-terminus: Probable potassium transport system protein Kup (626 aa).

The next 12 helical transmembrane spans lie at 11 to 31, 55 to 75, 103 to 123, 140 to 160, 171 to 191, 216 to 236, 250 to 270, 282 to 302, 340 to 360, 369 to 389, 395 to 415, and 422 to 442; these read FLTLSAGALGVVYGDIGTSPL, LSLIFWALFIIVAVKYVVFVM, AWIISLGLFGTALFYGDGMIT, AALSHYVVPASILILLALFLI, LFGPIMLLWFLSIGTLGFVSL, LGFAALGAVVLAVTGAEALYA, WFAVVFPSLILNYLGQGALLI, LLVPEWALYPMIGLATAATVI, IYAPAVNRLLLISVLALVLAF, AYGLAVVGTMVVTTLLALVVA, WPGLALLVTGAVLLSVDLSFL, and LGDGGWIPLSLGLILATVMST.

Belongs to the HAK/KUP transporter (TC 2.A.72) family.

It is found in the cell inner membrane. The catalysed reaction is K(+)(in) + H(+)(in) = K(+)(out) + H(+)(out). Functionally, transport of potassium into the cell. Likely operates as a K(+):H(+) symporter. The polypeptide is Probable potassium transport system protein Kup (Methylococcus capsulatus (strain ATCC 33009 / NCIMB 11132 / Bath)).